A 160-amino-acid chain; its full sequence is Iron-sulfur assembly protein IscA1 (160 aa).

This sequence belongs to the HesB/IscA family. As to quaternary structure, tetramer.

It is found in the mitochondrion. It participates in cofactor biosynthesis; iron-sulfur cluster biosynthesis. Participates in iron-sulfur cluster formation (ISC) pathway for iron-sulfur (Fe-S) cluster biogenesis. Can bind iron and [4Fe-4S] clusters. May function as an iron chaperone. This Plasmodium falciparum (isolate 3D7) protein is Iron-sulfur assembly protein IscA1.